Consider the following 579-residue polypeptide: Lens epithelium-derived growth factor (579 aa).

The 64-residue stretch at 1-64 (MSRDFKPGDL…PKDIFPYSEN (64 aa)) folds into the PWWP domain. Disordered stretches follow at residues 62-81 (SENKDKYGKPNKRKGFNEGL), 88-203 (PKVK…EEAA), 215-397 (AAPV…SMDS), and 492-579 (AEQK…FENK). The span at 94–107 (HQPSHPAVNTSIKE) shows a compositional bias: polar residues. Over residues 153–173 (KEMHSTKEDEEPSEKNSKEGV) the composition is skewed to basic and acidic residues. The segment covering 184–193 (VARRGRKRKA) has biased composition (basic residues). Residues 186–196 (RRGRKRKAEKQ) carry the Nuclear localization signal motif. The segment covering 215–224 (AAPVTVSPKV) has biased composition (low complexity). Over residues 261–308 (EEEKAKKKGPDEKPKKQGKKDEEGQKEEEKPKKEYDKKDGKKEAEPKR) the composition is skewed to basic and acidic residues. Residues 321–330 (DSEDEGGEEE) are compositionally biased toward acidic residues. Positions 334-349 (KKKGGRSFQSTHRRNI) are enriched in basic residues. The stretch at 347–442 (RNIMRGQHEK…SMQQAQKHTE (96 aa)) forms a coiled coil. Composition is skewed to basic and acidic residues over residues 352–397 (GQHE…SMDS) and 492–522 (AEQKQHEEANKTKEQWKKGTNKKNEKEKDQT). An integrase-binding domain (IBD) region spans residues 387 to 464 (MEKKRETSMD…VSQVIMEKST (78 aa)). Residues 530–543 (GSETQDTNQSQHNG) show a composition bias toward polar residues. Positions 544 to 579 (ENAEEKDKLEVASKKKTCGEESELEKPAKESAFENK) are enriched in basic and acidic residues.

It belongs to the HDGF family.

It localises to the nucleus. Transcriptional coactivator involved in neuroepithelial stem cell differentiation and neurogenesis. Involved in particular in lens epithelial cell gene regulation and stress responses. May play an important role in lens epithelial to fiber cell terminal differentiation. May play a protective role during stress-induced apoptosis. This Gallus gallus (Chicken) protein is Lens epithelium-derived growth factor (PSIP1).